Reading from the N-terminus, the 463-residue chain is Metacaspase-1 (463 aa).

The disordered stretch occupies residues 1-149 (MSWNQYPGGG…PQLQGQGGQS (149 aa)). The span at 7 to 18 (PGGGHHQQGGYG) shows a compositional bias: gly residues. The segment covering 20-56 (RPPPPQWAQQGPPPPPNMGYRPPPPPQAYYNNPPPPQ) has biased composition (pro residues). A compositionally biased stretch (low complexity) spans 57–83 (QYQRPAPQQNGYQQGGYQQQQQSQGNY). Active-site residues include H247 and C309.

This sequence belongs to the peptidase C14B family.

In terms of biological role, involved in cell death (apoptosis). This is Metacaspase-1 (MCA1) from Cryptococcus neoformans var. neoformans serotype D (strain B-3501A) (Filobasidiella neoformans).